The following is a 128-amino-acid chain: Small ribosomal subunit protein eS8 (128 aa).

The disordered stretch occupies residues 1 to 41 (MSYYQGNDSRKITGGQKGKNRDKRKYELGSPPTETKISDKD).

Belongs to the eukaryotic ribosomal protein eS8 family. Part of the 30S ribosomal subunit.

This is Small ribosomal subunit protein eS8 from Sulfolobus acidocaldarius (strain ATCC 33909 / DSM 639 / JCM 8929 / NBRC 15157 / NCIMB 11770).